Consider the following 550-residue polypeptide: CTP synthase (550 aa).

The amidoligase domain stretch occupies residues 1–265 (MTKFIFVTGG…DEIVVEQLGL (265 aa)). Ser13 contributes to the CTP binding site. Residue Ser13 coordinates UTP. 14-19 (SLGKGI) serves as a coordination point for ATP. Tyr54 provides a ligand contact to L-glutamine. Position 71 (Asp71) interacts with ATP. Positions 71 and 139 each coordinate Mg(2+). CTP is bound by residues 146-148 (DIE), 186-191 (KTKPTQ), and Lys222. UTP-binding positions include 186-191 (KTKPTQ) and Lys222. The region spanning 290–541 (TITLVGKYVD…IRAAAEHRRR (252 aa)) is the Glutamine amidotransferase type-1 domain. L-glutamine is bound at residue Gly351. The active-site Nucleophile; for glutamine hydrolysis is Cys378. Residues 379-382 (LGMQ), Glu402, and Arg469 each bind L-glutamine. Active-site residues include His514 and Glu516.

The protein belongs to the CTP synthase family. As to quaternary structure, homotetramer.

The catalysed reaction is UTP + L-glutamine + ATP + H2O = CTP + L-glutamate + ADP + phosphate + 2 H(+). It carries out the reaction L-glutamine + H2O = L-glutamate + NH4(+). It catalyses the reaction UTP + NH4(+) + ATP = CTP + ADP + phosphate + 2 H(+). It functions in the pathway pyrimidine metabolism; CTP biosynthesis via de novo pathway; CTP from UDP: step 2/2. Its activity is regulated as follows. Allosterically activated by GTP, when glutamine is the substrate; GTP has no effect on the reaction when ammonia is the substrate. The allosteric effector GTP functions by stabilizing the protein conformation that binds the tetrahedral intermediate(s) formed during glutamine hydrolysis. Inhibited by the product CTP, via allosteric rather than competitive inhibition. In terms of biological role, catalyzes the ATP-dependent amination of UTP to CTP with either L-glutamine or ammonia as the source of nitrogen. Regulates intracellular CTP levels through interactions with the four ribonucleotide triphosphates. The polypeptide is CTP synthase (Nitrosococcus oceani (strain ATCC 19707 / BCRC 17464 / JCM 30415 / NCIMB 11848 / C-107)).